The following is a 126-amino-acid chain: MLSHMLKAKLHMAKVTQAELWYDGSCAIDADLVALAGMREFEQIDIYNVSNGERFHTYIILAEPGSGTISMNGAAARKVAVGDRVIIATYGHFTEAELLNHKPKLVYLNENNGVERTSNAIPMQVA.

Ser25 serves as the catalytic Schiff-base intermediate with substrate; via pyruvic acid. The residue at position 25 (Ser25) is a Pyruvic acid (Ser). Position 57 (Thr57) interacts with substrate. Tyr58 functions as the Proton donor in the catalytic mechanism. 73–75 (GAA) contacts substrate.

It belongs to the PanD family. In terms of assembly, heterooctamer of four alpha and four beta subunits. The cofactor is pyruvate. Post-translationally, is synthesized initially as an inactive proenzyme, which is activated by self-cleavage at a specific serine bond to produce a beta-subunit with a hydroxyl group at its C-terminus and an alpha-subunit with a pyruvoyl group at its N-terminus.

The protein localises to the cytoplasm. The enzyme catalyses L-aspartate + H(+) = beta-alanine + CO2. The protein operates within cofactor biosynthesis; (R)-pantothenate biosynthesis; beta-alanine from L-aspartate: step 1/1. Functionally, catalyzes the pyruvoyl-dependent decarboxylation of aspartate to produce beta-alanine. In Cellvibrio japonicus (strain Ueda107) (Pseudomonas fluorescens subsp. cellulosa), this protein is Aspartate 1-decarboxylase.